Here is a 169-residue protein sequence, read N- to C-terminus: Cyclic pyranopterin monophosphate synthase (169 aa).

Substrate contacts are provided by residues 83–85 (LCH) and 121–122 (ME). Asp-136 is an active-site residue.

The protein belongs to the MoaC family. Homohexamer; trimer of dimers.

It catalyses the reaction (8S)-3',8-cyclo-7,8-dihydroguanosine 5'-triphosphate = cyclic pyranopterin phosphate + diphosphate. It functions in the pathway cofactor biosynthesis; molybdopterin biosynthesis. In terms of biological role, catalyzes the conversion of (8S)-3',8-cyclo-7,8-dihydroguanosine 5'-triphosphate to cyclic pyranopterin monophosphate (cPMP). The polypeptide is Cyclic pyranopterin monophosphate synthase (Rhodospirillum centenum (strain ATCC 51521 / SW)).